Reading from the N-terminus, the 179-residue chain is Large ribosomal subunit protein uL5 (179 aa).

Belongs to the universal ribosomal protein uL5 family. In terms of assembly, part of the 50S ribosomal subunit; part of the 5S rRNA/L5/L18/L25 subcomplex. Contacts the 5S rRNA and the P site tRNA. Forms a bridge to the 30S subunit in the 70S ribosome.

In terms of biological role, this is one of the proteins that bind and probably mediate the attachment of the 5S RNA into the large ribosomal subunit, where it forms part of the central protuberance. In the 70S ribosome it contacts protein S13 of the 30S subunit (bridge B1b), connecting the 2 subunits; this bridge is implicated in subunit movement. Contacts the P site tRNA; the 5S rRNA and some of its associated proteins might help stabilize positioning of ribosome-bound tRNAs. This chain is Large ribosomal subunit protein uL5, found in Trichlorobacter lovleyi (strain ATCC BAA-1151 / DSM 17278 / SZ) (Geobacter lovleyi).